We begin with the raw amino-acid sequence, 161 residues long: uncharacterized protein (161 aa).

The span at 1–10 shows a compositional bias: polar residues; the sequence is MSKQQEQDTP. Disordered regions lie at residues 1–20, 55–84, and 118–161; these read MSKQQEQDTPSFGEIRQRLQ, KKTREEQIAEDEHAASLRRLGHAERSMSDE, and LLQQ…ANNS. Residues 82–107 are a coiled coil; the sequence is SDEEYARQLQEEMDRLDASIQMDKEA. Low complexity predominate over residues 144–161; sequence QQSSNTTTSSSCQSANNS.

This is an uncharacterized protein from Caenorhabditis elegans.